We begin with the raw amino-acid sequence, 347 residues long: KIN17-like protein KLP (347 aa).

The Nuclear localization signal (NLS) motif lies at 222–225 (KRKR).

Belongs to the KIN17 family.

It localises to the cytoplasm. The protein localises to the nucleus. Functionally, may act as repressor of root growth during copper excess and of hypocotyl growth in the dark. This Arabidopsis thaliana (Mouse-ear cress) protein is KIN17-like protein KLP.